The primary structure comprises 499 residues: uncharacterized protein (499 aa).

This is an uncharacterized protein from Metamycoplasma hominis (strain ATCC 23114 / DSM 25592 / NBRC 14850 / NCTC 10111 / PG21) (Mycoplasma hominis).